We begin with the raw amino-acid sequence, 180 residues long: tRNA (cytidine(56)-2'-O)-methyltransferase (180 aa).

An S-adenosyl-L-methionine-binding site is contributed by Leu85.

This sequence belongs to the aTrm56 family. Homodimer.

It is found in the cytoplasm. The catalysed reaction is cytidine(56) in tRNA + S-adenosyl-L-methionine = 2'-O-methylcytidine(56) in tRNA + S-adenosyl-L-homocysteine + H(+). Functionally, specifically catalyzes the AdoMet-dependent 2'-O-ribose methylation of cytidine at position 56 in tRNAs. This is tRNA (cytidine(56)-2'-O)-methyltransferase from Methanobrevibacter smithii (strain ATCC 35061 / DSM 861 / OCM 144 / PS).